Consider the following 415-residue polypeptide: uncharacterized protein (415 aa).

[4Fe-4S] cluster-binding residues include C276 and C316.

As to quaternary structure, homodimer. It depends on [4Fe-4S] cluster as a cofactor.

This is an uncharacterized protein from Methanocaldococcus jannaschii (strain ATCC 43067 / DSM 2661 / JAL-1 / JCM 10045 / NBRC 100440) (Methanococcus jannaschii).